We begin with the raw amino-acid sequence, 113 residues long: Protein S100-A9 (113 aa).

Residue alanine 2 is modified to N-acetylalanine. 2 consecutive EF-hand domains span residues isoleucine 13–threonine 48 and arginine 55–alanine 90. Histidine 21 contributes to the Zn(2+) binding site. Ca(2+) contacts are provided by serine 24 and histidine 29. Aspartate 31 provides a ligand contact to Zn(2+). 7 residues coordinate Ca(2+): threonine 32, glutamate 37, aspartate 68, asparagine 70, aspartate 72, glutamine 74, and glutamate 79. Residues histidine 92 and histidine 96 each coordinate Zn(2+). Histidine 107 is subject to Pros-methylhistidine.

The protein belongs to the S-100 family. In terms of assembly, homodimer. Preferentially exists as a heterodimer or heterotetramer with S100A8 known as calprotectin (S100A8/A9). S100A9 interacts with ATP2A2. S100A9 interacts with AGER, and with the heterodimeric complex formed by TLR4 and LY96 in the presence of calcium and/or zinc ions. S100A9 binds quinoline-3-carboxamides in the presence of calcium and/or zinc ions. S100A9 interacts with amyloid-beta protein 40. Calprotectin (S100A8/9) interacts with CEACAM3 and tubulin filaments in a calcium-dependent manner. Heterotetrameric calprotectin (S100A8/A9) interacts with ANXA6 and associates with tubulin filaments in activated monocytes. Calprotectin (S100A8/9) interacts with NCF2/P67PHOX, RAC1, RAC2, CYBA and CYBB. Calprotectin (S100A8/9) interacts with NOS2 to form the iNOS-S100A8/A9 transnitrosylase complex; induced by LDL(ox). Calprotectin (S100A8/9) interacts with CD69. Phosphorylated. Phosphorylation inhibits activation of tubulin polymerization. Post-translationally, methylation at His-107 by METTL9 reduces zinc-binding without affecting heterodimerization with S100A8.

The protein localises to the secreted. It is found in the cytoplasm. Its subcellular location is the cytoskeleton. The protein resides in the cell membrane. Its function is as follows. S100A9 is a calcium- and zinc-binding protein which plays a prominent role in the regulation of inflammatory processes and immune response. It can induce neutrophil chemotaxis, adhesion, can increase the bactericidal activity of neutrophils by promoting phagocytosis via activation of SYK, PI3K/AKT, and ERK1/2 and can induce degranulation of neutrophils by a MAPK-dependent mechanism. Predominantly found as calprotectin (S100A8/A9) which has a wide plethora of intra- and extracellular functions. The intracellular functions include: facilitating leukocyte arachidonic acid trafficking and metabolism, modulation of the tubulin-dependent cytoskeleton during migration of phagocytes and activation of the neutrophilic NADPH-oxidase. Also participates in regulatory T-cell differentiation together with CD69. Activates NADPH-oxidase by facilitating the enzyme complex assembly at the cell membrane, transferring arachidonic acid, an essential cofactor, to the enzyme complex and S100A8 contributes to the enzyme assembly by directly binding to NCF2/P67PHOX. The extracellular functions involve pro-inflammatory, antimicrobial, oxidant-scavenging and apoptosis-inducing activities. Its pro-inflammatory activity includes recruitment of leukocytes, promotion of cytokine and chemokine production, and regulation of leukocyte adhesion and migration. Acts as an alarmin or a danger associated molecular pattern (DAMP) molecule and stimulates innate immune cells via binding to pattern recognition receptors such as Toll-like receptor 4 (TLR4) and receptor for advanced glycation endproducts (AGER). Binding to TLR4 and AGER activates the MAP-kinase and NF-kappa-B signaling pathways resulting in the amplification of the pro-inflammatory cascade. Has antimicrobial activity towards bacteria and fungi and exerts its antimicrobial activity probably via chelation of Zn(2+) which is essential for microbial growth. Can induce cell death via autophagy and apoptosis and this occurs through the cross-talk of mitochondria and lysosomes via reactive oxygen species (ROS) and the process involves BNIP3. Can regulate neutrophil number and apoptosis by an anti-apoptotic effect; regulates cell survival via ITGAM/ITGB and TLR4 and a signaling mechanism involving MEK-ERK. Its role as an oxidant scavenger has a protective role in preventing exaggerated tissue damage by scavenging oxidants. The iNOS-S100A8/A9 transnitrosylase complex is proposed to direct selective inflammatory stimulus-dependent S-nitrosylation of multiple targets such as GAPDH, NXA5, EZR, MSN and VIM by recognizing a [IL]-x-C-x-x-[DE] motif. The chain is Protein S100-A9 (S100a9) from Mus musculus (Mouse).